The chain runs to 252 residues: MRAKRIIPCLDVHGGRVVKGTNFINLRDAGDPVEFAAFYDKEGADELVFLDISATSEERQTMVEVVRQTAREVSIPFAVGGGIRTLDDISNILKAGADKVSMNSAAIRDPQIIKEGAVKFGSQCIVVAIDARRISENSWEVYIDGGQVATGMDAREWARKVESLGAGEILLTSMDKDGTKDGYDIELTAAISEQVGIPVIASGGAGKLEHLYEAITQGKADAVLCASIFHFREYTVRQAKEYLAAKGVAVRL.

Catalysis depends on residues D11 and D130.

It belongs to the HisA/HisF family. In terms of assembly, heterodimer of HisH and HisF.

The protein localises to the cytoplasm. It carries out the reaction 5-[(5-phospho-1-deoxy-D-ribulos-1-ylimino)methylamino]-1-(5-phospho-beta-D-ribosyl)imidazole-4-carboxamide + L-glutamine = D-erythro-1-(imidazol-4-yl)glycerol 3-phosphate + 5-amino-1-(5-phospho-beta-D-ribosyl)imidazole-4-carboxamide + L-glutamate + H(+). The protein operates within amino-acid biosynthesis; L-histidine biosynthesis; L-histidine from 5-phospho-alpha-D-ribose 1-diphosphate: step 5/9. Functionally, IGPS catalyzes the conversion of PRFAR and glutamine to IGP, AICAR and glutamate. The HisF subunit catalyzes the cyclization activity that produces IGP and AICAR from PRFAR using the ammonia provided by the HisH subunit. This is Imidazole glycerol phosphate synthase subunit HisF from Syntrophomonas wolfei subsp. wolfei (strain DSM 2245B / Goettingen).